A 268-amino-acid chain; its full sequence is MADS-box protein FBP24 (268 aa).

Residues 4–64 (MGRGKIEVKR…GKLFEYCSQP (61 aa)) form the MADS-box domain. One can recognise a K-box domain in the interval 88–178 (RVQLYDEVAK…YQWLMNNQMY (91 aa)). The tract at residues 243–268 (NSISPYRLQPSHPNLQDSHVHGPSYD) is disordered.

Its subcellular location is the nucleus. Probable transcription factor. This chain is MADS-box protein FBP24 (FBP24), found in Petunia hybrida (Petunia).